A 155-amino-acid polypeptide reads, in one-letter code: Ubiquitin-conjugating enzyme E2 14 (155 aa).

A UBC core domain is found at 7–154 (SSSRRLTKEY…ARDYVEQFAK (148 aa)). The active-site Glycyl thioester intermediate is the Cys91.

This sequence belongs to the ubiquitin-conjugating enzyme family.

The catalysed reaction is S-ubiquitinyl-[E1 ubiquitin-activating enzyme]-L-cysteine + [E2 ubiquitin-conjugating enzyme]-L-cysteine = [E1 ubiquitin-activating enzyme]-L-cysteine + S-ubiquitinyl-[E2 ubiquitin-conjugating enzyme]-L-cysteine.. It participates in protein modification; protein ubiquitination. In terms of biological role, catalyzes the covalent attachment of ubiquitin to other proteins. Mediates the selective degradation of short-lived and abnormal proteins. The chain is Ubiquitin-conjugating enzyme E2 14 (ubc14) from Schizosaccharomyces pombe (strain 972 / ATCC 24843) (Fission yeast).